The chain runs to 197 residues: Imidazoleglycerol-phosphate dehydratase (197 aa).

The protein belongs to the imidazoleglycerol-phosphate dehydratase family.

The protein localises to the cytoplasm. It carries out the reaction D-erythro-1-(imidazol-4-yl)glycerol 3-phosphate = 3-(imidazol-4-yl)-2-oxopropyl phosphate + H2O. It participates in amino-acid biosynthesis; L-histidine biosynthesis; L-histidine from 5-phospho-alpha-D-ribose 1-diphosphate: step 6/9. The protein is Imidazoleglycerol-phosphate dehydratase of Clostridium acetobutylicum (strain ATCC 824 / DSM 792 / JCM 1419 / IAM 19013 / LMG 5710 / NBRC 13948 / NRRL B-527 / VKM B-1787 / 2291 / W).